The primary structure comprises 408 residues: Adenylosuccinate synthetase (408 aa).

GTP-binding positions include 12–18 (GDEGKGK) and 40–42 (GHT). Residue aspartate 13 is the Proton acceptor of the active site. Mg(2+) is bound by residues aspartate 13 and glycine 40. IMP-binding positions include 13-16 (DEGK), 38-41 (NAGH), threonine 121, arginine 135, glutamine 213, threonine 228, and arginine 292. The Proton donor role is filled by histidine 41. Position 288 to 294 (288 to 294 (TTTGRPR)) interacts with substrate. GTP-binding positions include arginine 294, 320 to 322 (KLD), and 393 to 395 (STS).

This sequence belongs to the adenylosuccinate synthetase family. Homodimer. The cofactor is Mg(2+).

It localises to the cytoplasm. It catalyses the reaction IMP + L-aspartate + GTP = N(6)-(1,2-dicarboxyethyl)-AMP + GDP + phosphate + 2 H(+). Its pathway is purine metabolism; AMP biosynthesis via de novo pathway; AMP from IMP: step 1/2. Functionally, plays an important role in the de novo pathway of purine nucleotide biosynthesis. Catalyzes the first committed step in the biosynthesis of AMP from IMP. This is Adenylosuccinate synthetase from Thermus thermophilus (strain ATCC BAA-163 / DSM 7039 / HB27).